Consider the following 1040-residue polypeptide: Multidrug resistance protein MdtB (1040 aa).

12 helical membrane-spanning segments follow: residues 25–45 (LLMA…PVAA), 347–367 (LMLA…NIPA), 369–389 (IIPG…MVFL), 396–416 (LTLM…IVVI), 440–460 (IGFT…PLLF), 472–492 (FAVT…TLTP), 537–557 (WLTL…WIVI), 863–883 (LGST…VLGV), 888–908 (FIHP…ALLA), 910–930 (IIAG…LIGI), 968–988 (ILMT…STGV), and 998–1018 (IAMV…TPVI).

This sequence belongs to the resistance-nodulation-cell division (RND) (TC 2.A.6) family. MdtB subfamily. Part of a tripartite efflux system composed of MdtA, MdtB and MdtC. MdtB forms a heteromultimer with MdtC.

It is found in the cell inner membrane. The sequence is that of Multidrug resistance protein MdtB from Salmonella choleraesuis (strain SC-B67).